A 226-amino-acid polypeptide reads, in one-letter code: Thymidylate kinase (226 aa).

9-16 (GPEGSGKS) lines the ATP pocket.

It belongs to the thymidylate kinase family.

The enzyme catalyses dTMP + ATP = dTDP + ADP. Phosphorylation of dTMP to form dTDP in both de novo and salvage pathways of dTTP synthesis. This chain is Thymidylate kinase, found in Roseiflexus sp. (strain RS-1).